The sequence spans 901 residues: MENEYRLRFFEEEGLKRKRCKVCGSYFWTKGEHEVCGDSPCQEYEFFDVPTKVKLSLRDAKREFIKFFEEKGHVPVEPRPVVARWRDDLFLTIASIVVFQPHVTKGLVPPPANPLVIVQPCIRLEDIDNVGLTLGRHMTGFHMGGHHAFNYPDNWVYWKEETVKLAYEFFTERIGIPEELLNFKESWWEGGGNAGPSFEVTVAGLELATLVFMQYDVVEENGQKKYVPMKLKVVDTGYGIERIAWFTQKTPTAFHAVYGELLHEFHKRLGVEEPPDELLYELVRSAGLMDPERPETLERVYKRASEKLGMRVDEIREIHSRASLVYQVLDHTRTLMWMLADGIVPSNVGEGYLARLVIRRTLRALKKLKADVPLSELLELQINYWKDDYPRAWKNKDYILDVVEFEQKKFEETLKKGRNIVIRLIKKKKQITLDDLVELYDSHGIPPDIVSEIAKEMGVRVEVPHNFYSIVASRHQKTVHKVKGAEEKGKLPPEIIEWAKGFPPTRRLFHEDPYMKEFDAQVIGSNRNYVILDKTAFYPEGGGQAADTGVIASGDESYRVVDVQKVGDVIVHVLDRDYSGGKVVVGRIDWERRYRLMRHHTGTHLLLGALRKVLGDHVWQAGAEKTPEKARFDFTHHKPLTREEVRKIEEVANKVIDERRKIRAFTLPRNEAEARYWFSIYQGGVPMSKDIRLVEIEGWDVEACFGTHLSNTGEVGSLKIISTRKIQDGVVRVEFVAGTRVAEEAAKMEDLIREASEKLSTNPEMLVKRIDALQKELENVKKTVAEYRKRLVSEYLKAAKALDGIKYVKLDLRDPELVQEVLRALSSDSPAAVIVDGRVELAAPKGVDVGKAVREVVREVGCKGGGKGNRATVVCESEEKVVELLSKLAAKLTSQPSGRRG.

Histidine 600, histidine 604, cysteine 704, and histidine 708 together coordinate Zn(2+).

This sequence belongs to the class-II aminoacyl-tRNA synthetase family. Requires Zn(2+) as cofactor.

It localises to the cytoplasm. The enzyme catalyses tRNA(Ala) + L-alanine + ATP = L-alanyl-tRNA(Ala) + AMP + diphosphate. Functionally, catalyzes the attachment of alanine to tRNA(Ala) in a two-step reaction: alanine is first activated by ATP to form Ala-AMP and then transferred to the acceptor end of tRNA(Ala). Also edits incorrectly charged Ser-tRNA(Ala) and Gly-tRNA(Ala) via its editing domain. The protein is Alanine--tRNA ligase of Ignicoccus hospitalis (strain KIN4/I / DSM 18386 / JCM 14125).